Consider the following 144-residue polypeptide: MKLNDLSPAPGSRREKHRPGRGIGSGLGKTGGRGHKGQTSRSGGSIAPGFEGGQQPLHRRLPKFGFVSLKAMDRAEVRLSELAKVEGDVISVQSLKDANVINQHIQRVKIMLSGEVTRAVTIKGIAATKGARAAIEAAGGKFEE.

The interval 1–57 is disordered; the sequence is MKLNDLSPAPGSRREKHRPGRGIGSGLGKTGGRGHKGQTSRSGGSIAPGFEGGQQPL. Residues 21 to 31 show a composition bias toward gly residues; the sequence is RGIGSGLGKTG.

The protein belongs to the universal ribosomal protein uL15 family. Part of the 50S ribosomal subunit.

Functionally, binds to the 23S rRNA. In Pseudomonas putida (strain ATCC 700007 / DSM 6899 / JCM 31910 / BCRC 17059 / LMG 24140 / F1), this protein is Large ribosomal subunit protein uL15.